Consider the following 115-residue polypeptide: Parathyroid hormone (115 aa).

The signal sequence occupies residues 1 to 25 (MIPAKDMAKVMIVMLAICFLTKSDG). Residues 26–31 (KSVKKR) constitute a propeptide that is removed on maturation. The interval 51–69 (RVEWLRKKLQDVHNFIALG) is important for receptor binding. The tract at residues 72 to 96 (LAPRDAGSQRPRKKEDNILVESHEK) is disordered. Residues 84 to 96 (KKEDNILVESHEK) are compositionally biased toward basic and acidic residues.

The protein belongs to the parathyroid hormone family. In terms of assembly, interacts with PTH1R (via N-terminal extracellular domain).

The protein resides in the secreted. Parathyroid hormone elevates calcium level by dissolving the salts in bone and preventing their renal excretion. Acts by binding to its receptor, PTH1R, activating G protein-coupled receptor signaling. Stimulates [1-14C]-2-deoxy-D-glucose (2DG) transport and glycogen synthesis in osteoblastic cells. In Macaca fascicularis (Crab-eating macaque), this protein is Parathyroid hormone (PTH).